A 507-amino-acid polypeptide reads, in one-letter code: Chromosomal replication initiator protein DnaA (507 aa).

Residues 1-112 (MTDDPGSGFT…PATDEADDTT (112 aa)) form a domain I, interacts with DnaA modulators region. Residues 99–162 (RIAPPATDEA…ERPRNTDSAT (64 aa)) are disordered. Polar residues predominate over residues 113–127 (VPPSENPATTSPDTT). The domain II stretch occupies residues 113-166 (VPPSENPATTSPDTTTDNDEIDDSAAARGDNQHSWPSYFTERPRNTDSATAGVT). Positions 167–383 (SLNRRYTFDT…GALIRVTAFA (217 aa)) are domain III, AAA+ region. 4 residues coordinate ATP: G211, G213, K214, and T215. The interval 384-507 (SLNKTPIDKA…TTRIRQRSKR (124 aa)) is domain IV, binds dsDNA.

It belongs to the DnaA family. In terms of assembly, oligomerizes as a right-handed, spiral filament on DNA at oriC.

It localises to the cytoplasm. In terms of biological role, plays an essential role in the initiation and regulation of chromosomal replication. ATP-DnaA binds to the origin of replication (oriC) to initiate formation of the DNA replication initiation complex once per cell cycle. Binds the DnaA box (a 9 base pair repeat at the origin) and separates the double-stranded (ds)DNA. Forms a right-handed helical filament on oriC DNA; dsDNA binds to the exterior of the filament while single-stranded (ss)DNA is stabiized in the filament's interior. The ATP-DnaA-oriC complex binds and stabilizes one strand of the AT-rich DNA unwinding element (DUE), permitting loading of DNA polymerase. After initiation quickly degrades to an ADP-DnaA complex that is not apt for DNA replication. Binds acidic phospholipids. The sequence is that of Chromosomal replication initiator protein DnaA from Mycobacterium bovis (strain ATCC BAA-935 / AF2122/97).